A 604-amino-acid chain; its full sequence is Glucose oxidase (604 aa).

A signal peptide spans 1 to 18 (MKSTIITSILFSVATVQA). FAD-binding residues include Leu-52, Thr-53, and Glu-73. Asn-111 carries N-linked (GlcNAc...) asparagine glycosylation. Residues Ser-125, Asn-129, Gly-130, and Ser-132 each contribute to the FAD site. Cys-186 and Cys-228 are joined by a disulfide. Asn-213 is a glycosylation site (N-linked (GlcNAc...) asparagine). Residue Val-272 coordinates FAD. 3 N-linked (GlcNAc...) asparagine glycosylation sites follow: Asn-278, Asn-409, and Asn-531. The active-site Proton acceptor is the His-537. Lys-558 and Val-559 together coordinate O2. Residues Gly-570 and Met-582 each coordinate FAD.

This sequence belongs to the GMC oxidoreductase family. As to quaternary structure, homodimer. The cofactor is FAD.

The protein localises to the secreted. Its subcellular location is the cell wall. It is found in the cytoplasm. It localises to the extracellular space. The protein resides in the extracellular matrix. The enzyme catalyses beta-D-glucose + O2 = D-glucono-1,5-lactone + H2O2. Functionally, glucose oxidase catalyzes the oxidation of beta-D-glucose to D-glucono-delta-lactone and hydrogen peroxide in the presence of molecular oxygen. The enzyme also catalyzes the reaction with D-xylose but at a much lower rate. Shows any activities against D-fructose, D-galactose and D-arabinose. The enzyme is cytotoxic for a series of bacteria, yeasts and filamentous fungi and acts primarily via the liberation of H(2)O(2), which is a harmful oxidative stress-generating agent. The sequence is that of Glucose oxidase from Penicillium chrysogenum (Penicillium notatum).